The chain runs to 314 residues: Homoserine O-acetyltransferase (314 aa).

C142 serves as the catalytic Acyl-thioester intermediate. The substrate site is built by K163 and S192. H235 (proton acceptor) is an active-site residue. The active site involves E237. R249 contacts substrate.

The protein belongs to the MetA family.

The protein localises to the cytoplasm. The enzyme catalyses L-homoserine + acetyl-CoA = O-acetyl-L-homoserine + CoA. The protein operates within amino-acid biosynthesis; L-methionine biosynthesis via de novo pathway; O-acetyl-L-homoserine from L-homoserine: step 1/1. In terms of biological role, transfers an acetyl group from acetyl-CoA to L-homoserine, forming acetyl-L-homoserine. The polypeptide is Homoserine O-acetyltransferase (Streptococcus pneumoniae (strain Taiwan19F-14)).